Reading from the N-terminus, the 717-residue chain is uncharacterized protein (717 aa).

This sequence belongs to the asfivirus C717R family.

It is found in the virion. This is an uncharacterized protein from African swine fever virus (strain Badajoz 1971 Vero-adapted) (Ba71V).